Consider the following 64-residue polypeptide: Large ribosomal subunit protein uL29 (64 aa).

It belongs to the universal ribosomal protein uL29 family.

The chain is Large ribosomal subunit protein uL29 from Pseudomonas entomophila (strain L48).